The primary structure comprises 251 residues: NADH-quinone oxidoreductase subunit C (251 aa).

The interval 1–34 (MSDANNTAGDANEVNPEKDLSAENLPGQRGQGGE) is disordered.

It belongs to the complex I 30 kDa subunit family. NDH-1 is composed of 14 different subunits. Subunits NuoB, C, D, E, F, and G constitute the peripheral sector of the complex.

Its subcellular location is the cell membrane. It catalyses the reaction a quinone + NADH + 5 H(+)(in) = a quinol + NAD(+) + 4 H(+)(out). In terms of biological role, NDH-1 shuttles electrons from NADH, via FMN and iron-sulfur (Fe-S) centers, to quinones in the respiratory chain. The immediate electron acceptor for the enzyme in this species is believed to be a menaquinone. Couples the redox reaction to proton translocation (for every two electrons transferred, four hydrogen ions are translocated across the cytoplasmic membrane), and thus conserves the redox energy in a proton gradient. This Streptomyces coelicolor (strain ATCC BAA-471 / A3(2) / M145) protein is NADH-quinone oxidoreductase subunit C.